We begin with the raw amino-acid sequence, 437 residues long: Probable glycine dehydrogenase (decarboxylating) subunit 1 (437 aa).

Belongs to the GcvP family. N-terminal subunit subfamily. In terms of assembly, the glycine cleavage system is composed of four proteins: P, T, L and H. In this organism, the P 'protein' is a heterodimer of two subunits.

The catalysed reaction is N(6)-[(R)-lipoyl]-L-lysyl-[glycine-cleavage complex H protein] + glycine + H(+) = N(6)-[(R)-S(8)-aminomethyldihydrolipoyl]-L-lysyl-[glycine-cleavage complex H protein] + CO2. The glycine cleavage system catalyzes the degradation of glycine. The P protein binds the alpha-amino group of glycine through its pyridoxal phosphate cofactor; CO(2) is released and the remaining methylamine moiety is then transferred to the lipoamide cofactor of the H protein. The protein is Probable glycine dehydrogenase (decarboxylating) subunit 1 of Thermotoga petrophila (strain ATCC BAA-488 / DSM 13995 / JCM 10881 / RKU-1).